The sequence spans 261 residues: Putative diacylated glycolipid transporter LprF (261 aa).

The signal sequence occupies residues 1 to 38 (MNGLISQACGSHRPRRPSSLGAVAILIAATLFATVVAG). Residue Cys-39 is the site of N-palmitoyl cysteine attachment. Cys-39 carries the S-diacylglycerol cysteine lipid modification. The interval 42 to 61 (KPTTASSPSPGSPSPEAQQI) is disordered.

It belongs to the LppX/LprAFG lipoprotein family. Monomer. Post-translationally, modified by Lgt on Cys-39 with an S-linked diacylglycerol with a mixture of C16, C18 and C19 fatty acids (palmitic, stearic and tuberculostearic acid respectively), signal peptide is removed by LspA, modified by Lnt with an amide-linked mixture of C16 and C19 fatty acids.

It localises to the cell membrane. Might be involved in transporting short diacylated glycolipids to the cell outer membrane. Binds glycolipids that contain a diacylated glycerophosphate or a diacylated phosphatidylinositol moiety with C14 and C16 chains (upon overexpression in M.smegmatis; M.smegmatis does not encode this gene). Overexpression in M.smegmatis increases the cell wall glycolipid LAM/LM ratio (lipoarabinomannan/lipomannan), suggesting perhaps this protein is involved in the preferential translocation of diacylated LAM to the outer cell membrane. Overexpressing M.smegmatis cells adhere less well to hexadecane droplets, indicating decrease in the hydrophobicity of the cell surface, and have a slightly increased resistance to the antibiotic ethambutol. The sequence is that of Putative diacylated glycolipid transporter LprF (lprF) from Mycobacterium bovis (strain ATCC BAA-935 / AF2122/97).